An 86-amino-acid chain; its full sequence is U15-lycotoxin-Ls1d (86 aa).

A signal peptide spans 1–20 (MNSKIFAVLLLLAFLSCVLS). One can recognise a WAP domain in the interval 21–66 (DQYCPKSSITACKKMNIRNDCCKDDDCTGGSWCCATPCGNFCKYPT). Cystine bridges form between C24/C54, C32/C58, C41/C53, C42/C80, and C47/C62.

It belongs to the venom protein 11 family. 01 (wap-1) subfamily. In terms of processing, contains 5 disulfide bonds. In terms of tissue distribution, expressed by the venom gland.

Its subcellular location is the secreted. Functionally, has antibacterial activity. This chain is U15-lycotoxin-Ls1d, found in Lycosa singoriensis (Wolf spider).